Here is a 249-residue protein sequence, read N- to C-terminus: Tetrahydromethanopterin S-methyltransferase subunit A (249 aa).

At 2-225 the chain is on the cytoplasmic side; the sequence is PEKAEPAEGW…YMAGYLSGRT (224 aa). Histidine 88 is a binding site for 5-hydroxybenzimidazolylcob(I)amide. A helical transmembrane segment spans residues 226–246; sequence MGLLIGIISGMIFLFLPMVVL. The Extracellular portion of the chain corresponds to 247–249; sequence GGV.

The protein belongs to the MtrA family. As to quaternary structure, the complex is composed of 8 subunits; MtrA, MtrB, MtrC, MtrD, MtrE, MtrF, MtrG and MtrH. It depends on 5-hydroxybenzimidazolylcob(I)amide as a cofactor.

It is found in the cell membrane. It carries out the reaction 5-methyl-5,6,7,8-tetrahydromethanopterin + coenzyme M + 2 Na(+)(in) = 5,6,7,8-tetrahydromethanopterin + methyl-coenzyme M + 2 Na(+)(out). It participates in one-carbon metabolism; methanogenesis from CO(2); methyl-coenzyme M from 5,10-methylene-5,6,7,8-tetrahydromethanopterin: step 2/2. Functionally, part of a complex that catalyzes the formation of methyl-coenzyme M and tetrahydromethanopterin from coenzyme M and methyl-tetrahydromethanopterin. This is an energy-conserving, sodium-ion translocating step. The protein is Tetrahydromethanopterin S-methyltransferase subunit A of Methanopyrus kandleri (strain AV19 / DSM 6324 / JCM 9639 / NBRC 100938).